The sequence spans 150 residues: Large-conductance mechanosensitive channel (150 aa).

Transmembrane regions (helical) follow at residues 19 to 39 (VGII…SDVL) and 85 to 105 (GIFL…FMLI).

This sequence belongs to the MscL family. In terms of assembly, homopentamer.

It localises to the cell inner membrane. In terms of biological role, channel that opens in response to stretch forces in the membrane lipid bilayer. May participate in the regulation of osmotic pressure changes within the cell. This chain is Large-conductance mechanosensitive channel, found in Chlorobium limicola (strain DSM 245 / NBRC 103803 / 6330).